The sequence spans 351 residues: Phospho-N-acetylmuramoyl-pentapeptide-transferase (351 aa).

The next 10 membrane-spanning stretches (helical) occupy residues 17 to 37 (MAYA…HIIL), 62 to 82 (GIPT…LVFW), 85 to 105 (ILNV…FLGF), 130 to 150 (IIFS…HVSI), 163 to 183 (LGVF…NSFN), 190 to 210 (GLAI…AYIT), 230 to 250 (LVIF…FNAY), 254 to 274 (IMMG…TALI), 281 to 301 (FSIL…QVIV), and 328 to 348 (QVVI…LSTI).

The protein belongs to the glycosyltransferase 4 family. MraY subfamily. Mg(2+) serves as cofactor.

It is found in the cell inner membrane. It catalyses the reaction UDP-N-acetyl-alpha-D-muramoyl-L-alanyl-gamma-D-glutamyl-meso-2,6-diaminopimeloyl-D-alanyl-D-alanine + di-trans,octa-cis-undecaprenyl phosphate = di-trans,octa-cis-undecaprenyl diphospho-N-acetyl-alpha-D-muramoyl-L-alanyl-D-glutamyl-meso-2,6-diaminopimeloyl-D-alanyl-D-alanine + UMP. Its pathway is cell wall biogenesis; peptidoglycan biosynthesis. Catalyzes the initial step of the lipid cycle reactions in the biosynthesis of the cell wall peptidoglycan: transfers peptidoglycan precursor phospho-MurNAc-pentapeptide from UDP-MurNAc-pentapeptide onto the lipid carrier undecaprenyl phosphate, yielding undecaprenyl-pyrophosphoryl-MurNAc-pentapeptide, known as lipid I. This is Phospho-N-acetylmuramoyl-pentapeptide-transferase from Borreliella afzelii (strain PKo) (Borrelia afzelii).